A 2524-amino-acid chain; its full sequence is Highly reducing polyketide synthase Preu5 (2524 aa).

In terms of domain architecture, Ketosynthase family 3 (KS3) spans 5–426 (DTPIAIIGLS…GSNSAIVIEK (422 aa)). Catalysis depends on for beta-ketoacyl synthase activity residues C175, H310, and H350. The tract at residues 431–470 (DELGHETNGTNGVSVSNGVNGSNGFTNGSNGTNGHAENGN) is disordered. The segment covering 437 to 464 (TNGTNGVSVSNGVNGSNGFTNGSNGTNG) has biased composition (low complexity). Residues 559-882 (VFTGQGAQYA…TYLPSLVRNV (324 aa)) form a malonyl-CoA:ACP transacylase (MAT) domain region. The active-site For malonyltransferase activity is the S648. The N-terminal hotdog fold stretch occupies residues 950–1084 (HELLGRRVVS…GQIEPEFADM (135 aa)). The region spanning 950 to 1264 (HELLGRRVVS…FRNIGSADEN (315 aa)) is the PKS/mFAS DH domain. A dehydratase (DH) domain region spans residues 950–1266 (HELLGRRVVS…NIGSADENID (317 aa)). H982 functions as the Proton acceptor; for dehydratase activity in the catalytic mechanism. The interval 1102-1264 (ADLLEHDIEG…FRNIGSADEN (163 aa)) is C-terminal hotdog fold. The Proton donor; for dehydratase activity role is filled by D1171. The methyltransferase (CMet) domain stretch occupies residues 1418-1611 (SQAVGDLADN…IPGVWDSEVQ (194 aa)). The interval 1825-2139 (GSPDSIYFRR…SGDHLGKIVV (315 aa)) is enoylreductase (ER) domain. Residues 2164–2339 (GTYLVTGGTR…HTVSIALPIV (176 aa)) are ketoreductase (KR) domain. The Carrier domain maps to 2445 to 2522 (DPLEGLTEAL…ALATDILSQR (78 aa)). S2482 carries the O-(pantetheine 4'-phosphoryl)serine modification.

It depends on pantetheine 4'-phosphate as a cofactor.

Its function is as follows. Highly reducing polyketide synthase; part of a gene cluster that mediates the biosynthesis of a yet unidentified natural product. In Preussia isomera (Coprophilous fungus), this protein is Highly reducing polyketide synthase Preu5.